A 209-amino-acid polypeptide reads, in one-letter code: Ubiquitin-conjugating enzyme E2 S (209 aa).

Positions 14–160 (QTIRQVMREL…ARMMTEIHAQ (147 aa)) constitute a UBC core domain. The active-site Glycyl thioester intermediate is Cys98. The tract at residues 162–209 (AKCGAGAHGDDKDDDGPSTKKHAGLDKKLQDKKKEKLLKEKKRMLKRL) is disordered. Residues 169 to 199 (HGDDKDDDGPSTKKHAGLDKKLQDKKKEKLL) show a composition bias toward basic and acidic residues. Over residues 200 to 209 (KEKKRMLKRL) the composition is skewed to basic residues.

Belongs to the ubiquitin-conjugating enzyme family.

The catalysed reaction is S-ubiquitinyl-[E1 ubiquitin-activating enzyme]-L-cysteine + [E2 ubiquitin-conjugating enzyme]-L-cysteine = [E1 ubiquitin-activating enzyme]-L-cysteine + S-ubiquitinyl-[E2 ubiquitin-conjugating enzyme]-L-cysteine.. The protein operates within protein modification; protein ubiquitination. Its function is as follows. Catalyzes the covalent attachment of ubiquitin to other proteins. Acts as an essential factor of the anaphase promoting complex/cyclosome (APC/C), a cell cycle-regulated ubiquitin ligase that controls progression through mitosis. Acts by specifically elongating polyubiquitin chains initiated by the E2 enzyme vih/UbcH10 on APC/C substrates, enhancing the degradation of APC/C substrates by the proteasome and promoting mitotic exit. The sequence is that of Ubiquitin-conjugating enzyme E2 S from Drosophila erecta (Fruit fly).